The sequence spans 148 residues: uncharacterized protein (148 aa).

Residues 7 to 148 (LEINYKTDEL…HDVLLWKPIR (142 aa)) enclose the N-acetyltransferase domain.

This is an uncharacterized protein from Staphylococcus aureus (strain Mu50 / ATCC 700699).